The sequence spans 72 residues: Conotoxin im23a (72 aa).

A signal peptide spans 1-22 (MIMRMTLTLFVLVVMTAASASG). Residues 23–28 (DALTEA) constitute a propeptide that is removed on maturation. 3 cysteine pairs are disulfide-bonded: cysteine 34/cysteine 41, cysteine 45/cysteine 55, and cysteine 56/cysteine 71.

The protein belongs to the conotoxin K superfamily. Expressed by the venom duct.

The protein localises to the secreted. Functionally, neurotoxin that induces excitatory symptoms in mice following intracranial administration. No symptoms are observed after intraperitoneal and intravenous (tail vein) injections. The chain is Conotoxin im23a from Conus imperialis (Imperial cone).